The sequence spans 300 residues: NAD kinase (300 aa).

Catalysis depends on Asp75, which acts as the Proton acceptor. NAD(+) contacts are provided by residues 75-76, 149-150, Arg177, Asp179, 190-195, Ala214, and Gln248; these read DG, ND, and TAYALS.

This sequence belongs to the NAD kinase family. A divalent metal cation serves as cofactor.

It is found in the cytoplasm. It catalyses the reaction NAD(+) + ATP = ADP + NADP(+) + H(+). In terms of biological role, involved in the regulation of the intracellular balance of NAD and NADP, and is a key enzyme in the biosynthesis of NADP. Catalyzes specifically the phosphorylation on 2'-hydroxyl of the adenosine moiety of NAD to yield NADP. The protein is NAD kinase of Burkholderia cenocepacia (strain ATCC BAA-245 / DSM 16553 / LMG 16656 / NCTC 13227 / J2315 / CF5610) (Burkholderia cepacia (strain J2315)).